The chain runs to 176 residues: Caltractin (176 aa).

Positions 1 to 27 (MNRAAIAAGKPSGSISTGKPRRKTRAE) are disordered. 4 EF-hand domains span residues 31–66 (EMKH…LGFD), 67–102 (VKKE…KISN), 104–139 (DPTE…LSEN), and 140–175 (ISDE…TSAF). Ca(2+) contacts are provided by Asp-44, Asp-46, Ser-48, Arg-50, and Glu-55. Ca(2+) contacts are provided by Asp-153, Asp-155, Asp-157, Glu-159, and Asp-164.

It belongs to the centrin family. As to quaternary structure, monomer.

The protein resides in the cytoplasm. Its subcellular location is the cytoskeleton. It localises to the microtubule organizing center. It is found in the centrosome. Plays a fundamental role in microtubule-organizing center structure and function. This chain is Caltractin (CAL), found in Giardia intestinalis (Giardia lamblia).